Reading from the N-terminus, the 189-residue chain is Putative lipoprotein LppK (189 aa).

Positions 1 to 22 are cleaved as a signal peptide; sequence MRRNIRVTLGAATIVAALGLSG. Residue Cys23 is the site of N-palmitoyl cysteine attachment. Residue Cys23 is the site of S-diacylglycerol cysteine attachment. Disordered stretches follow at residues 26-49 and 166-189; these read PEFK…LEAA and MGNS…TPPG. Low complexity predominate over residues 169-179; it reads SPDSTPSATSP. Positions 180-189 are enriched in pro residues; the sequence is APAPSPTPPG.

The protein belongs to the MTB12 family.

It is found in the cell membrane. The sequence is that of Putative lipoprotein LppK (lppK) from Mycobacterium tuberculosis (strain CDC 1551 / Oshkosh).